The primary structure comprises 116 residues: Beta-D-galactosidase Rv1717 (116 aa).

The 68-residue stretch at 40–107 folds into the Cupin type-2 domain; that stretch reads LSVYRPGGTA…TDRQALLLVT (68 aa).

It localises to the secreted. Its subcellular location is the cell wall. The enzyme catalyses Hydrolysis of terminal non-reducing beta-D-galactose residues in beta-D-galactosides.. Its activity is regulated as follows. Beta-galactosidase activity is activated by Mg(2+) and significantly inhibited by Ca(2+), Cd(2+), Fe(2+), Ni(2+), Cu(2+) and Zn(2+). Inhibited by EDTA. Functionally, beta-D-galactopyranosidase that specifically recognizes the beta-glycosidic bonds formed with beta-D-galactopyranose (beta-D-Gal) or N-acetylgalactosamine (beta-D-GalNAc). May target the galactoside linkages in the exopolysaccharide component of the mycobacterial extracellular polymeric substance (EPS) and help dispersal of Mtb bacteria from a deteriorating biofilm. The sequence is that of Beta-D-galactosidase Rv1717 from Mycobacterium tuberculosis (strain ATCC 25618 / H37Rv).